Consider the following 356-residue polypeptide: MILFGSTGSIGVNALKLAALKNIRISALACGDNIALLNEQIARFKPKFVAIKDSKNKHLVKHNRVFIGQEGLEQILTECQDKLLLNAIVGFAGLKSTLKAKELGKNIALANKESLVVAGSFLKGAKFLPVDSEHAALKFLLEGKKNIAKLYITASGGAFYKYKIKDLNQVSLKDALKHPNWNMGAKITIDSATMANKLFEIIEAYHLYDFKEIDALIEPRSLVHAMCEFKNGASTAYFSKADMKLAISDAIFEKQDTPILEAIDFSKIPALKFHPISTKKYPIFKLKNTFLKEPNLGVIINAANEVGVYNFLENKSGFLDITKCIFKALDHFGVPKISSIEEVFEYDFKTREYLRS.

NADPH is bound by residues Thr7, Gly8, Ser9, Ile10, Gly31, Asn33, and Asn111. 1-deoxy-D-xylulose 5-phosphate is bound at residue Lys112. An NADPH-binding site is contributed by Glu113. Asp131 serves as a coordination point for Mn(2+). 1-deoxy-D-xylulose 5-phosphate contacts are provided by Ser132, Glu133, Ser155, and His178. Glu133 contributes to the Mn(2+) binding site. Residue Gly184 participates in NADPH binding. The 1-deoxy-D-xylulose 5-phosphate site is built by Ser191, Asn196, Lys197, and Glu200. Glu200 provides a ligand contact to Mn(2+).

It belongs to the DXR family. Mg(2+) serves as cofactor. The cofactor is Mn(2+).

The enzyme catalyses 2-C-methyl-D-erythritol 4-phosphate + NADP(+) = 1-deoxy-D-xylulose 5-phosphate + NADPH + H(+). Its pathway is isoprenoid biosynthesis; isopentenyl diphosphate biosynthesis via DXP pathway; isopentenyl diphosphate from 1-deoxy-D-xylulose 5-phosphate: step 1/6. Catalyzes the NADPH-dependent rearrangement and reduction of 1-deoxy-D-xylulose-5-phosphate (DXP) to 2-C-methyl-D-erythritol 4-phosphate (MEP). The sequence is that of 1-deoxy-D-xylulose 5-phosphate reductoisomerase from Campylobacter jejuni subsp. jejuni serotype O:23/36 (strain 81-176).